Reading from the N-terminus, the 467-residue chain is A-type ATP synthase subunit B (467 aa).

The protein belongs to the ATPase alpha/beta chains family. Has multiple subunits with at least A(3), B(3), C, D, E, F, H, I and proteolipid K(x).

It localises to the cell membrane. Component of the A-type ATP synthase that produces ATP from ADP in the presence of a proton gradient across the membrane. The B chain is a regulatory subunit. The sequence is that of A-type ATP synthase subunit B from Methanosphaera stadtmanae (strain ATCC 43021 / DSM 3091 / JCM 11832 / MCB-3).